A 321-amino-acid chain; its full sequence is tRNA-dihydrouridine synthase B (321 aa).

Residues 16 to 18 and Gln70 each bind FMN; that span reads PMA. Cys100 functions as the Proton donor in the catalytic mechanism. FMN-binding positions include Lys139, 200–202, and 224–225; these read NGD and GR.

It belongs to the Dus family. DusB subfamily. It depends on FMN as a cofactor.

It carries out the reaction a 5,6-dihydrouridine in tRNA + NAD(+) = a uridine in tRNA + NADH + H(+). It catalyses the reaction a 5,6-dihydrouridine in tRNA + NADP(+) = a uridine in tRNA + NADPH + H(+). Functionally, catalyzes the synthesis of 5,6-dihydrouridine (D), a modified base found in the D-loop of most tRNAs, via the reduction of the C5-C6 double bond in target uridines. The sequence is that of tRNA-dihydrouridine synthase B from Salmonella typhi.